A 453-amino-acid chain; its full sequence is Putative long chain fatty acid-CoA ligase VraA (453 aa).

The protein belongs to the ATP-dependent AMP-binding enzyme family.

The chain is Putative long chain fatty acid-CoA ligase VraA (vraA) from Staphylococcus epidermidis (strain ATCC 35984 / DSM 28319 / BCRC 17069 / CCUG 31568 / BM 3577 / RP62A).